Reading from the N-terminus, the 427-residue chain is Serine--tRNA ligase (427 aa).

Residue 232-234 (TAE) coordinates L-serine. An ATP-binding site is contributed by 263 to 265 (RSE). E286 provides a ligand contact to L-serine. 350–353 (EISS) is a binding site for ATP. S385 contacts L-serine.

This sequence belongs to the class-II aminoacyl-tRNA synthetase family. Type-1 seryl-tRNA synthetase subfamily. Homodimer. The tRNA molecule binds across the dimer.

Its subcellular location is the cytoplasm. It carries out the reaction tRNA(Ser) + L-serine + ATP = L-seryl-tRNA(Ser) + AMP + diphosphate + H(+). The catalysed reaction is tRNA(Sec) + L-serine + ATP = L-seryl-tRNA(Sec) + AMP + diphosphate + H(+). It participates in aminoacyl-tRNA biosynthesis; selenocysteinyl-tRNA(Sec) biosynthesis; L-seryl-tRNA(Sec) from L-serine and tRNA(Sec): step 1/1. In terms of biological role, catalyzes the attachment of serine to tRNA(Ser). Is also able to aminoacylate tRNA(Sec) with serine, to form the misacylated tRNA L-seryl-tRNA(Sec), which will be further converted into selenocysteinyl-tRNA(Sec). This chain is Serine--tRNA ligase, found in Lacticaseibacillus casei (strain BL23) (Lactobacillus casei).